Here is a 488-residue protein sequence, read N- to C-terminus: Monodehydroascorbate reductase 4, peroxisomal (488 aa).

Residues 1 to 3 (MGR) are Cytoplasmic-facing. The chain crosses the membrane as a helical span at residues 4–24 (AFVYVILGGGVAAGYAALEFT). FAD contacts are provided by residues 12–15 (GGVA), Glu-39, Arg-46, Lys-51, and 145–146 (RD). At 25–458 (RRGVSDGELC…SASVVMIKKP (434 aa)) the chain is on the peroxisomal side. Residues 170 to 176 (GGYIGME), Glu-194, Arg-200, and Gly-259 contribute to the NAD(+) site. Residue 172 to 176 (YIGME) coordinates NADP(+). Residues Arg-200 and Gly-259 each contribute to the NADP(+) site. Asp-296 contacts FAD. Position 312–313 (312–313 (EH)) interacts with NAD(+). 312–313 (EH) lines the NADP(+) pocket. Val-314 contributes to the FAD binding site. Arg-318 is a binding site for L-ascorbate. Tyr-344 serves as a coordination point for FAD. Tyr-344 contributes to the NAD(+) binding site. Tyr-344 is a binding site for NADP(+). L-ascorbate is bound at residue Arg-346. Residues 459–479 (LYVWHAATGVVVAASVAAFAF) form a helical membrane-spanning segment. The Cytoplasmic segment spans residues 480-488 (WYGRRRRRW).

This sequence belongs to the FAD-dependent oxidoreductase family. The cofactor is FAD.

Its subcellular location is the peroxisome membrane. It catalyses the reaction 2 monodehydro-L-ascorbate radical + NADH + H(+) = 2 L-ascorbate + NAD(+). In terms of biological role, catalyzes the conversion of monodehydroascorbate to ascorbate, oxidizing NADH in the process. Involved in the detoxification of H(2)O(2) that escapes the peroxisome and causes oxidative damage to oil bodies. The chain is Monodehydroascorbate reductase 4, peroxisomal from Arabidopsis thaliana (Mouse-ear cress).